A 458-amino-acid chain; its full sequence is Serine protease Do-like HtrB (458 aa).

The span at 1-18 shows a compositional bias: basic and acidic residues; the sequence is MDYRRDGQNDQHQTEPSH. The tract at residues 1–42 is disordered; sequence MDYRRDGQNDQHQTEPSHTEQQNTENQKLIGHSEQELLDAPV. Residues 1 to 71 lie on the Cytoplasmic side of the membrane; the sequence is MDYRRDGQND…TAVKKEKKRR (71 aa). A helical transmembrane segment spans residues 72–92; that stretch reads AAWLSPILGGIIGGGLMLGIA. The Extracellular segment spans residues 93 to 458; sequence PYLPSDQNQA…LTKQTESSSS (366 aa). Residues 146-170 form a disordered region; sequence QTSQNNTFGTGGGSSSESESGTGSG. Residues His-187, Asp-217, and Ser-298 each act as charge relay system in the active site. Residues 296–298 and 352–356 contribute to the substrate site; these read GNS and LGVQM. The 85-residue stretch at 356 to 440 folds into the PDZ domain; the sequence is MIDMSQVPET…KTTIQVLRKG (85 aa).

This sequence belongs to the peptidase S1C family.

The protein localises to the cell membrane. The enzyme catalyses Acts on substrates that are at least partially unfolded. The cleavage site P1 residue is normally between a pair of hydrophobic residues, such as Val-|-Val.. In terms of biological role, degrades abnormal exported proteins and responsible for the propeptide processing of a natural pro-protein and for the maturation of a native protein. It also plays a prominent role in stress (heat shock, ethanol, puromycin and NaCl) resistance during active exponential growth. In Bacillus subtilis (strain 168), this protein is Serine protease Do-like HtrB (htrB).